We begin with the raw amino-acid sequence, 610 residues long: F-box/LRR-repeat protein 4 (610 aa).

The F-box domain maps to 5-52; the sequence is DRINNCLPEELILEIFRRLESKPNRDACSLVCKRWLSLERFSRTTLRI. 19 LRR repeats span residues 53 to 79, 124 to 149, 150 to 175, 178 to 200, 201 to 227, 228 to 253, 256 to 277, 278 to 303, 304 to 329, 330 to 355, 356 to 381, 382 to 407, 408 to 433, 434 to 459, 460 to 484, 485 to 510, 511 to 536, 537 to 562, and 563 to 588; these read GASFSPDDFISLLSRRFLYITSIHVDE, SSSLTDTGLTALANGFPRIENLSLIW, CPNVSSVGLCSLAQKCTSLKSLDLQG, VGDQGLAAVGKFCKQLEELNLRF, CEGLTDVGVIDLVVGCSKSLKSIGVAA, SAKITDLSLEAVGSHCKLLEVLYLDS, IHDKGLIAVAQGCHRLKNLKLQ, CVSVTDVAFAAVGELCTSLERLALYS, FQHFTDKGMRAIGKGSKKLKDLTLSD, CYFVSCKGLEAIAHGCKELERVEING, CHNIGTRGIEAIGKSCPRLKELALLY, CQRIGNSALQEIGKGCKSLEILHLVD, CSGIGDIAMCSIAKGCRNLKKLHIRR, CYEIGNKGIISIGKHCKSLTELSLRF, CDKVGNKALIAIGKGCSLQQLNVSG, CNQISDAGITAIARGCPQLTHLDISV, LQNIGDMPLAELGEGCPMLKDLVLSH, CHHITDNGLNHLVQKCKLLETCHMVY, and CPGITSAGVATVVSSCPHIKKVLIEK. A disordered region spans residues 88-125; the sequence is LSPSPKRKRGRDSSSPSSSKRKKLTDKTHSGAENVESS.

The protein is F-box/LRR-repeat protein 4 (FBL4) of Arabidopsis thaliana (Mouse-ear cress).